Here is a 454-residue protein sequence, read N- to C-terminus: Bifunctional protein GlmU (454 aa).

A pyrophosphorylase region spans residues 1-226; sequence MSLNVVILAA…AIEVEGANNR (226 aa). UDP-N-acetyl-alpha-D-glucosamine-binding positions include 8 to 11, K22, Q73, 78 to 79, 100 to 102, G137, E151, N166, and N224; these read LAAG, GT, and YGD. D102 provides a ligand contact to Mg(2+). N224 lines the Mg(2+) pocket. Residues 227–247 are linker; sequence VQLAQLERAYQARAAEKMMLE. Positions 248-454 are N-acetyltransferase; that stretch reads GANLRDPARI…GWQRPIKIKK (207 aa). The UDP-N-acetyl-alpha-D-glucosamine site is built by R330 and K348. The Proton acceptor role is filled by H360. UDP-N-acetyl-alpha-D-glucosamine is bound by residues Y363 and N374. Residues A377, 383–384, S402, A420, and R437 contribute to the acetyl-CoA site; that span reads NY.

In the N-terminal section; belongs to the N-acetylglucosamine-1-phosphate uridyltransferase family. It in the C-terminal section; belongs to the transferase hexapeptide repeat family. In terms of assembly, homotrimer. It depends on Mg(2+) as a cofactor.

The protein localises to the cytoplasm. It carries out the reaction alpha-D-glucosamine 1-phosphate + acetyl-CoA = N-acetyl-alpha-D-glucosamine 1-phosphate + CoA + H(+). It catalyses the reaction N-acetyl-alpha-D-glucosamine 1-phosphate + UTP + H(+) = UDP-N-acetyl-alpha-D-glucosamine + diphosphate. It functions in the pathway nucleotide-sugar biosynthesis; UDP-N-acetyl-alpha-D-glucosamine biosynthesis; N-acetyl-alpha-D-glucosamine 1-phosphate from alpha-D-glucosamine 6-phosphate (route II): step 2/2. Its pathway is nucleotide-sugar biosynthesis; UDP-N-acetyl-alpha-D-glucosamine biosynthesis; UDP-N-acetyl-alpha-D-glucosamine from N-acetyl-alpha-D-glucosamine 1-phosphate: step 1/1. The protein operates within bacterial outer membrane biogenesis; LPS lipid A biosynthesis. Functionally, catalyzes the last two sequential reactions in the de novo biosynthetic pathway for UDP-N-acetylglucosamine (UDP-GlcNAc). The C-terminal domain catalyzes the transfer of acetyl group from acetyl coenzyme A to glucosamine-1-phosphate (GlcN-1-P) to produce N-acetylglucosamine-1-phosphate (GlcNAc-1-P), which is converted into UDP-GlcNAc by the transfer of uridine 5-monophosphate (from uridine 5-triphosphate), a reaction catalyzed by the N-terminal domain. In Shewanella frigidimarina (strain NCIMB 400), this protein is Bifunctional protein GlmU.